Consider the following 334-residue polypeptide: tRNA methyltransferase 10 homolog A (334 aa).

Disordered regions lie at residues methionine 1–arginine 101 and proline 290–serine 334. Residues histidine 26–proline 40 show a composition bias toward polar residues. Residues lysine 62–isoleucine 94 adopt a coiled-coil conformation. Basic residues predominate over residues arginine 71–leucine 84. Residues glutamate 85–serine 98 are compositionally biased toward basic and acidic residues. The SAM-dependent MTase TRM10-type domain occupies serine 98–isoleucine 289. Over residues glutamine 305–isoleucine 317 the composition is skewed to acidic residues.

This sequence belongs to the class IV-like SAM-binding methyltransferase superfamily. TRM10 family.

It catalyses the reaction guanosine(9) in tRNA + S-adenosyl-L-methionine = N(1)-methylguanosine(9) in tRNA + S-adenosyl-L-homocysteine + H(+). S-adenosyl-L-methionine-dependent guanine N(1)-methyltransferase that catalyzes the formation of N(1)-methylguanine at position 9 (m1G9) in tRNAs. Probably not able to catalyze formation of N(1)-methyladenine at position 9 (m1A9) in tRNAs. The chain is tRNA methyltransferase 10 homolog A (trmt10a) from Xenopus tropicalis (Western clawed frog).